Reading from the N-terminus, the 357-residue chain is Neuronal-specific septin-3 (357 aa).

Positions 1 to 10 are enriched in basic and acidic residues; it reads MSKGLPETRT. The segment at 1-29 is disordered; it reads MSKGLPETRTDAAMSELVPEPRPKPAVPM. Positions 58–330 constitute a Septin-type G domain; the sequence is TGFDFNIMVV…ETYRAKRLND (273 aa). The G1 motif stretch occupies residues 68-75; the sequence is GQSGLGKS. 68–75 is a GTP binding site; that stretch reads GQSGLGKS. Phosphoserine is present on Ser91. Thr102 serves as a coordination point for GTP. The G3 motif stretch occupies residues 125–128; it reads DTPG. Positions 207-210 are G4 motif; it reads AKAD. GTP contacts are provided by residues 208–216, Gly264, and Arg279; that span reads KADTMTLEE.

The protein belongs to the TRAFAC class TrmE-Era-EngA-EngB-Septin-like GTPase superfamily. Septin GTPase family. Septins polymerize into heterooligomeric protein complexes that form filaments, and can associate with cellular membranes, actin filaments and microtubules. GTPase activity is required for filament formation. Phosphorylated by PKG on serine residues. Phosphorylated by PKG on Ser-91.

It localises to the cytoplasm. The protein resides in the cytoskeleton. The protein localises to the synapse. In terms of biological role, filament-forming cytoskeletal GTPase. May play a role in cytokinesis (Potential). The chain is Neuronal-specific septin-3 from Bos taurus (Bovine).